Here is a 241-residue protein sequence, read N- to C-terminus: tRNA pseudouridine synthase B (241 aa).

The active-site Nucleophile is the Asp-52.

It belongs to the pseudouridine synthase TruB family. Type 1 subfamily.

The enzyme catalyses uridine(55) in tRNA = pseudouridine(55) in tRNA. In terms of biological role, responsible for synthesis of pseudouridine from uracil-55 in the psi GC loop of transfer RNAs. The polypeptide is tRNA pseudouridine synthase B (Chloroherpeton thalassium (strain ATCC 35110 / GB-78)).